A 31-amino-acid chain; its full sequence is Photosystem II reaction center protein T (31 aa).

A helical membrane pass occupies residues 3–23; it reads AFSYVLILTLALVTLFFAVAF.

Belongs to the PsbT family. PSII is composed of 1 copy each of membrane proteins PsbA, PsbB, PsbC, PsbD, PsbE, PsbF, PsbH, PsbI, PsbJ, PsbK, PsbL, PsbM, PsbT, PsbX, PsbY, Psb30/Ycf12, peripheral proteins PsbO, CyanoQ (PsbQ), PsbU, PsbV and a large number of cofactors. It forms dimeric complexes.

It is found in the cellular thylakoid membrane. Functionally, found at the monomer-monomer interface of the photosystem II (PS II) dimer, plays a role in assembly and dimerization of PSII. PSII is a light-driven water plastoquinone oxidoreductase, using light energy to abstract electrons from H(2)O, generating a proton gradient subsequently used for ATP formation. The protein is Photosystem II reaction center protein T of Prochlorococcus marinus (strain NATL2A).